A 560-amino-acid polypeptide reads, in one-letter code: Nucleoprotein (560 aa).

A binding site for the cap structure m7GTP region spans residues 54–236 (LRKSKRGDTD…ITKDESALNI (183 aa)). 2 residues coordinate Mn(2+): aspartate 380 and glutamate 382. Glutamate 390, cysteine 497, histidine 500, and cysteine 521 together coordinate Zn(2+). Residue aspartate 525 participates in Mn(2+) binding.

Belongs to the arenaviridae nucleocapsid protein family. As to quaternary structure, homomultimerizes to form the nucleocapsid. Binds to viral genomic RNA. Interacts with glycoprotein G2. Interacts with protein Z; this interaction probably directs the encapsidated genome to budding sites. Interacts with protein L; this interaction does not interfere with Z-L interaction. Interacts with host IKBKE (via Protein kinase domain); the interaction inhibits IKBKE kinase activity.

The protein localises to the virion. The protein resides in the host cytoplasm. Its function is as follows. Encapsidates the genome, protecting it from nucleases. The encapsidated genomic RNA is termed the nucleocapsid (NC). Serves as template for viral transcription and replication. The increased presence of protein N in host cell does not seem to trigger the switch from transcription to replication as observed in other negative strain RNA viruses. Through the interaction with host IKBKE, strongly inhibits the phosphorylation and nuclear translocation of host IRF3, a protein involved in interferon activation pathway, leading to the inhibition of interferon-beta and IRF3-dependent promoters activation. Also encodes a functional 3'-5' exoribonuclease that degrades preferentially dsRNA substrates and thereby participates in the suppression of interferon induction. This Homo sapiens (Human) protein is Nucleoprotein.